The chain runs to 460 residues: uncharacterized protein (460 aa).

To yeast YGL164c.

This is an uncharacterized protein from Schizosaccharomyces pombe (strain 972 / ATCC 24843) (Fission yeast).